The primary structure comprises 755 residues: MSNSLQSVILKTAEEKSGSRCISGCMYQVVPTIGSDGKKLLQLLPISKSSGNLIPVVQSPVMSHGLKANTEKPVQVTFQTQISSSSTSASVQLPVFQPANTTKCFFTGAIDTTGKDRVTSVRTGNFTPPVSNIQNHGVKIHKLTRQTFTIPPSTQNDSSHFIFNTPSLLPNVNSSILPSGNHLKIPAHAEVKSVLASSLPPLVQQKILGTATTSTSGTVEASQIPTVVYVHPVNSVKFVVTKKTQTIYPKPVTFNTLQIPPNVATETQLKGGQHPQAAPVNSIFQEYLQPGIPCIIPVKSSNNVATKVLNTFVGRKNLGDNTIDTPLLNTNSSGRTHSVSEPIKDNALIMFNGKVWLNEKGTCGLPSKIDQQNSVSSDIPLKDSSQLVSSSIVTEISREILNSVLVKSKSFQLKTKSLSNSQLASMANLRAEKNEKVERPSFSVTNPHTMNQSTHCLKQSKTVFINPVFPDGFRTGQNAPRKGNLVQNIEKICSSVDAATVTSQQCVFRDQESQTQYEMASIVKKEIQEKGNNKKYSQGSHTNIKASCLKNDAEFKKLFGLTKDLRVCLTRIPDHLSSGKSFNSFNSLMKSSSYKDANIVVKKEEKKQSFSKKRKAETMKMGNTKKIKIENADDTVMSIMNGTDVASSQPLSSILPTSDISQHNIVTSHSTTREDKRTEAEHCSHEKQEKGTLSSSTSFEQSTFLNKNFMEDIFPVTPPELEETIRDEKIRRLKQILREKEAALEELRKKMYQKQ.

K270 is covalently cross-linked (Glycyl lysine isopeptide (Lys-Gly) (interchain with G-Cter in SUMO2)). Residues S391, S419, and S425 each carry the phosphoserine modification. Residue K436 forms a Glycyl lysine isopeptide (Lys-Gly) (interchain with G-Cter in SUMO2) linkage. The PxVxL motif signature appears at L565 to L569. At S584 the chain carries Phosphoserine. K590 participates in a covalent cross-link: Glycyl lysine isopeptide (Lys-Gly) (interchain with G-Cter in SUMO2). 2 consecutive short sequence motifs (nuclear localization signal) follow at residues K612–K615 and K625–K628. The segment at I665–S698 is disordered. Over residues T671–K690 the composition is skewed to basic and acidic residues. Residues T678 to E711 adopt a coiled-coil conformation. K687 is covalently cross-linked (Glycyl lysine isopeptide (Lys-Gly) (interchain with G-Cter in SUMO2)). T717 bears the Phosphothreonine mark.

The protein belongs to the LRIF1 family. In terms of assembly, interacts with RARA. Interacts with SMCHD1; leading to recruitment to inactivated chromosome X in females. Interacts (via PxVxL motif) with HP1 (CBX1/HP1-beta, CBX3/HP1-gamma and CBX5/HP1-alpha).

It is found in the chromosome. Its subcellular location is the nucleus matrix. Functionally, together with SMCHD1, involved in chromosome X inactivation in females by promoting the compaction of heterochromatin. Also able to repress the ligand-induced transcriptional activity of retinoic acid receptor alpha (RARA), possibly through direct recruitment of histone deacetylases. The chain is Ligand-dependent nuclear receptor-interacting factor 1 (Lrif1) from Mus musculus (Mouse).